Here is a 234-residue protein sequence, read N- to C-terminus: ATP-dependent dethiobiotin synthetase BioD (234 aa).

12-17 (DVGKTF) is an ATP binding site. Threonine 16 provides a ligand contact to Mg(2+). Residue lysine 37 is part of the active site. A substrate-binding site is contributed by threonine 41. ATP-binding positions include aspartate 54 and 115–118 (EGAG). The Mg(2+) site is built by aspartate 54 and glutamate 115.

The protein belongs to the dethiobiotin synthetase family. As to quaternary structure, homodimer. The cofactor is Mg(2+).

Its subcellular location is the cytoplasm. The enzyme catalyses (7R,8S)-7,8-diammoniononanoate + CO2 + ATP = (4R,5S)-dethiobiotin + ADP + phosphate + 3 H(+). The protein operates within cofactor biosynthesis; biotin biosynthesis; biotin from 7,8-diaminononanoate: step 1/2. Catalyzes a mechanistically unusual reaction, the ATP-dependent insertion of CO2 between the N7 and N8 nitrogen atoms of 7,8-diaminopelargonic acid (DAPA, also called 7,8-diammoniononanoate) to form a ureido ring. In Lysinibacillus sphaericus (Bacillus sphaericus), this protein is ATP-dependent dethiobiotin synthetase BioD.